The sequence spans 250 residues: Cruxrhodopsin-1 (250 aa).

Topologically, residues 1–9 are extracellular; that stretch reads MPEPGSEAI. A helical transmembrane segment spans residues 10–27; sequence WLWLGTAGMFLGMLYFIA. Residues 28–41 are Cytoplasmic-facing; that stretch reads RGWGETDSRRQKFY. A helical membrane pass occupies residues 42–60; the sequence is IATILITAIAFVNYLAMAL. The Extracellular segment spans residues 61–77; it reads GFGLTIVEFAGEEHPIY. The chain crosses the membrane as a helical span at residues 78-94; sequence WARYSDWLFTTPLLLYD. Residues 95-105 are Cytoplasmic-facing; the sequence is LGLLAGADRNT. A helical transmembrane segment spans residues 106-125; the sequence is ITSLVSLDVLMIGTGLVATL. Residues 126–138 are Extracellular-facing; the sequence is SPGSGVLSAGAER. A helical membrane pass occupies residues 139-158; that stretch reads LVWWGISTAFLLVLLYFLFS. At 159-176 the chain is on the cytoplasmic side; it reads SLSGRVADLPSDTRSTFK. A helical transmembrane segment spans residues 177–195; sequence TLRNLVTVVWLVYPVWWLI. The Extracellular portion of the chain corresponds to 196–207; it reads GTEGIGLVGIGI. Residues 208–227 form a helical membrane-spanning segment; it reads ETAGFMVIDLTAKVGFGIIL. The residue at position 220 (Lys220) is an N6-(retinylidene)lysine. Over 228 to 250 the chain is Cytoplasmic; the sequence is LRSHGVLDGAAETTGTGATPADD.

The protein belongs to the archaeal/bacterial/fungal opsin family. In terms of assembly, homotrimer.

It localises to the cell membrane. Light-driven proton pump. In Haloarcula argentinensis, this protein is Cruxrhodopsin-1 (cop1).